We begin with the raw amino-acid sequence, 572 residues long: Nuclear hormone receptor family member nhr-25 (572 aa).

A DNA-binding region (nuclear receptor) is located at residues 15–90; the sequence is GEMCPVCGDR…MGMKMEAVRA (76 aa). 2 NR C4-type zinc fingers span residues 18–38 and 54–78; these read CPVCGDRVSGYHYGLLTCESC and CSAEANCHVDRTCRKRCPSCRFQKC. An NR LBD domain is found at 307-567; the sequence is PTEKTVDHFY…PTPQATYTAV (261 aa).

The protein belongs to the nuclear hormone receptor family. Interacts with lin-39. Interacts with nob-1. Expressed in the epidermis, the developing somatic gonad, and a subset of other epithelial cells.

It is found in the nucleus. Its function is as follows. Orphan nuclear receptor and probable transcription activator, required during development. Plays a role in male tail tip morphogenesis regulating the expression of the transcription factor dmd-3 in a negative feedback loop. Regulates vulval precursor cell (VPC) differentiation, in concert with homeobox protein lin-39. Involved in promoting embryogenesis, in concert with homeobox protein nob-1. May play a role in modulation of lifespan and immunity. The sequence is that of Nuclear hormone receptor family member nhr-25 from Caenorhabditis elegans.